The chain runs to 189 residues: Ribosomal RNA large subunit methyltransferase E (189 aa).

Positions 45, 47, 64, 82, and 104 each coordinate S-adenosyl-L-methionine. The active-site Proton acceptor is the K144.

The protein belongs to the class I-like SAM-binding methyltransferase superfamily. RNA methyltransferase RlmE family.

It localises to the cytoplasm. The enzyme catalyses uridine(2552) in 23S rRNA + S-adenosyl-L-methionine = 2'-O-methyluridine(2552) in 23S rRNA + S-adenosyl-L-homocysteine + H(+). Functionally, specifically methylates the uridine in position 2552 of 23S rRNA at the 2'-O position of the ribose in the fully assembled 50S ribosomal subunit. The sequence is that of Ribosomal RNA large subunit methyltransferase E from Borreliella afzelii (strain PKo) (Borrelia afzelii).